A 293-amino-acid chain; its full sequence is GTPase Era (293 aa).

The region spanning 5 to 174 (RTISVCIIGR…ITGKAQIAPW (170 aa)) is the Era-type G domain. Residues 13–20 (GRPNSGKS) are G1. Residue 13-20 (GRPNSGKS) coordinates GTP. The segment at 39 to 43 (QTTRS) is G2. Residues 60–63 (DTPG) are G3. GTP contacts are provided by residues 60–64 (DTPGI) and 122–125 (NKID). The G4 stretch occupies residues 122–125 (NKID). Residues 150–152 (ISA) are G5. In terms of domain architecture, KH type-2 spans 202–279 (LQQELPYKLT…HLFLFVKVHE (78 aa)).

Belongs to the TRAFAC class TrmE-Era-EngA-EngB-Septin-like GTPase superfamily. Era GTPase family. In terms of assembly, monomer.

Its subcellular location is the cytoplasm. It localises to the cell inner membrane. In terms of biological role, an essential GTPase that binds both GDP and GTP, with rapid nucleotide exchange. Plays a role in 16S rRNA processing and 30S ribosomal subunit biogenesis and possibly also in cell cycle regulation and energy metabolism. This Rickettsia akari (strain Hartford) protein is GTPase Era.